The primary structure comprises 461 residues: Piperine synthase (461 aa).

Catalysis depends on proton acceptor residues histidine 168 and aspartate 387. Positions 459–461 (SRM) match the Microbody targeting signal motif.

The protein belongs to the plant acyltransferase family. As to quaternary structure, monomer. Confined to immature fruits perisperm. Also detectable in roots.

The protein resides in the cytoplasm. The catalysed reaction is piperidine + (E,E)-piperoyl-CoA = piperine + CoA + H(+). The enzyme catalyses pyrrolidine + (E,E)-piperoyl-CoA = piperyline + CoA + H(+). It catalyses the reaction (E,E)-piperoyl-CoA + 2-methylpropan-1-amine = (E,E)-piperlonguminine + CoA + H(+). The protein operates within aromatic compound metabolism. Its function is as follows. Involved in the biosynthesis of aromatic piperamides natural products such as piperine (1-piperoyl-piperidine), the pungent principle contributing, together with several terpenoids, to the aromatic properties of black pepper fruits, and displaying numerous pharmacological activities such as antiproliferative, antitumor, antiangiogenesis, antioxidant, antidiabetic, antiobesity, cardioprotective, antimicrobial, antiaging, and immunomodulatory effects. Mediates mainly the conversion of piperidine and piperoyl-CoA to piperine. Can also use pyrrolidine and isobutylamine as acceptors and 3,4-methylenedioxycinnamoyl-CoA as an alternative CoA-donor with a lower efficiency. The chain is Piperine synthase from Piper nigrum (Black pepper).